A 682-amino-acid chain; its full sequence is Activating transcription factor 7-interacting protein 2 (682 aa).

Residues 120–148 (SRTTESPSRVFTEEAKDSLNTSENDSEHQ) are disordered. A compositionally biased stretch (polar residues) spans 137–148 (SLNTSENDSEHQ). Residues 328-378 (EIYSINYELFDKKLKELNQRIGKTECRNKHEGIADKLLAKIAKLQRRIKTV) adopt a coiled-coil conformation. A Phosphoserine modification is found at serine 416. Composition is skewed to polar residues over residues 418–451 (IEKSSVNYEPSNPSEKGSKKINLSSDQNKSVSES) and 462–490 (ESPNLTTPITSNPTDTRKITSGNSSNSPN). 2 disordered regions span residues 418–491 (IEKS…SPNA) and 513–538 (NCNTESPVSPLESHSKAASNSKETTP). A phosphoserine mark is found at serine 488 and serine 521. The segment covering 528 to 538 (KAASNSKETTP) has biased composition (polar residues). The region spanning 575–680 (PPQKPELKVK…IKSIPGFSEN (106 aa)) is the Fibronectin type-III domain.

This sequence belongs to the MCAF family. Interacts with MBD1, SETDB1 and SP1. Probably forms a complex with SETDB1 and MBD1.

It is found in the nucleus. Its function is as follows. Recruiter that couples transcriptional factors to general transcription apparatus and thereby modulates transcription regulation and chromatin formation. Can both act as an activator or a repressor depending on the context. Mediates MBD1-dependent transcriptional repression, probably by recruiting complexes containing SETDB1. The complex formed with MBD1 and SETDB1 represses transcription and probably couples DNA methylation and histone H3 'Lys-9' trimethylation (H3K9me3) activity. The chain is Activating transcription factor 7-interacting protein 2 (ATF7IP2) from Homo sapiens (Human).